The following is a 321-amino-acid chain: Cytochrome c biogenesis protein CcsA (321 aa).

Helical transmembrane passes span 17 to 37, 48 to 68, 71 to 91, 98 to 118, 143 to 163, 225 to 245, 259 to 273, and 286 to 306; these read VVSI…FVGL, TFFC…HLPI, LYES…VPYF, LSTI…WGLL, MVSG…LLVI, ILSI…VWAN, TWAF…IYFH, and AIVA…VNLL.

This sequence belongs to the CcmF/CycK/Ccl1/NrfE/CcsA family. As to quaternary structure, may interact with Ccs1.

It is found in the plastid. The protein localises to the chloroplast thylakoid membrane. Required during biogenesis of c-type cytochromes (cytochrome c6 and cytochrome f) at the step of heme attachment. The polypeptide is Cytochrome c biogenesis protein CcsA (Populus trichocarpa (Western balsam poplar)).